The primary structure comprises 375 residues: Growth/differentiation factor 8 (375 aa).

The signal sequence occupies residues 1 to 23 (MQKLQLCVYIYLFMLIVAGPVDL). The propeptide occupies 24–266 (NENSEQKENV…VTDTPKRSRR (243 aa)). Residue Asn-71 is glycosylated (N-linked (GlcNAc...) asparagine). Disulfide bonds link Cys-272–Cys-282, Cys-281–Cys-340, Cys-309–Cys-372, and Cys-313–Cys-374.

Belongs to the TGF-beta family. Homodimer; disulfide-linked. Interacts with WFIKKN2, leading to inhibit its activity. Interacts with FST3. In terms of processing, synthesized as large precursor molecule that undergoes proteolytic cleavage to generate an N-terminal propeptide and a disulfide linked C-terminal dimer, which is the biologically active molecule. The circulating form consists of a latent complex of the C-terminal dimer and other proteins, including its propeptide, which maintain the C-terminal dimer in a latent, inactive state. Ligand activation requires additional cleavage of the prodomain by a tolloid-like metalloproteinase.

It localises to the secreted. Functionally, acts specifically as a negative regulator of skeletal muscle growth. This chain is Growth/differentiation factor 8 (MSTN), found in Homo sapiens (Human).